The primary structure comprises 277 residues: Putative glucose-6-phosphate/phosphate-translocator-like protein 1 (277 aa).

The next 5 membrane-spanning stretches (helical) occupy residues 8–28 (VLPSLTAIVGIGIYFAIWWAL), 46–66 (LWLTLTLSLACGSLMMLVSWV), 124–143 (MIGFMGAMISNLAFVFRNIF), 153–173 (VSVMNYYACLSMMSLLIVTPF), and 230–250 (PLKHVNALGAAIAILGTFIYS).

Belongs to the TPT transporter family. GPT (TC 2.A.7.9) subfamily.

The protein resides in the membrane. This chain is Putative glucose-6-phosphate/phosphate-translocator-like protein 1, found in Arabidopsis thaliana (Mouse-ear cress).